Consider the following 474-residue polypeptide: PTS system sucrose-specific EIIBC component (474 aa).

Residues 4 to 87 form the PTS EIIB type-1 domain; sequence SQIAQQVIDK…SKLLGIGDMT (84 aa). Residue Cys26 is the Phosphocysteine intermediate; for EIIB activity of the active site. The PTS EIIC type-1 domain occupies 107–474; sequence KGLADIFVPI…LGKRAQLKAE (368 aa). The next 10 membrane-spanning stretches (helical) occupy residues 109 to 129, 158 to 178, 182 to 202, 229 to 249, 264 to 284, 303 to 323, 345 to 365, 376 to 396, 403 to 423, and 444 to 464; these read LADI…LMGI, FINT…GFSA, FGGN…PALS, VGYQ…ATLE, ITPL…IGPI, LGFV…ITGM, FIFP…LGAA, IAVP…MFGV, PFIS…LFNV, and LAMY…LTVI.

It is found in the cell inner membrane. It carries out the reaction N(pros)-phospho-L-histidyl-[protein](out) + sucrose = sucrose 6(G)-phosphate(in) + L-histidyl-[protein]. Functionally, the phosphoenolpyruvate-dependent sugar phosphotransferase system (sugar PTS), a major carbohydrate active transport system, catalyzes the phosphorylation of incoming sugar substrates concomitantly with their translocation across the cell membrane. This system is involved in sucrose transport. The sequence is that of PTS system sucrose-specific EIIBC component (scrA) from Pasteurella multocida (strain Pm70).